The primary structure comprises 274 residues: 2,3,4,5-tetrahydropyridine-2,6-dicarboxylate N-succinyltransferase (274 aa).

Substrate-binding residues include arginine 106 and aspartate 143.

Belongs to the transferase hexapeptide repeat family. As to quaternary structure, homotrimer.

It localises to the cytoplasm. The catalysed reaction is (S)-2,3,4,5-tetrahydrodipicolinate + succinyl-CoA + H2O = (S)-2-succinylamino-6-oxoheptanedioate + CoA. It functions in the pathway amino-acid biosynthesis; L-lysine biosynthesis via DAP pathway; LL-2,6-diaminopimelate from (S)-tetrahydrodipicolinate (succinylase route): step 1/3. This is 2,3,4,5-tetrahydropyridine-2,6-dicarboxylate N-succinyltransferase from Rickettsia rickettsii (strain Sheila Smith).